The primary structure comprises 102 residues: Urease subunit beta (102 aa).

It belongs to the urease beta subunit family. As to quaternary structure, heterotrimer of UreA (gamma), UreB (beta) and UreC (alpha) subunits. Three heterotrimers associate to form the active enzyme.

It localises to the cytoplasm. It carries out the reaction urea + 2 H2O + H(+) = hydrogencarbonate + 2 NH4(+). Its pathway is nitrogen metabolism; urea degradation; CO(2) and NH(3) from urea (urease route): step 1/1. In Methylobacillus flagellatus (strain ATCC 51484 / DSM 6875 / VKM B-1610 / KT), this protein is Urease subunit beta.